A 72-amino-acid polypeptide reads, in one-letter code: UPF0150 protein jhp_0960 (72 aa).

Belongs to the UPF0150 family.

This Helicobacter pylori (strain J99 / ATCC 700824) (Campylobacter pylori J99) protein is UPF0150 protein jhp_0960.